Reading from the N-terminus, the 155-residue chain is F-box only protein 48 (155 aa).

A disordered region spans residues M1–K27. Residues R7–N19 are compositionally biased toward polar residues. The F-box domain occupies N32–H79.

The chain is F-box only protein 48 (FBXO48) from Homo sapiens (Human).